Here is a 667-residue protein sequence, read N- to C-terminus: MKAIVFAYHDIGCVGLNALAEAGYDIQAVFTHTDNPGENRFFSSVARVAADLALPVFAPEDVNHPLWVERIRELQPDIIFSFYYRNMLSDEILSLAPQGGFNLHGSLLPQYRGRAPINWVLVNGETETGVTLHQMVKKADAGPIAGQYKVAISDVDTALTLHAKMRDAAQELLRNLLPRMKEGPLPLTPQKEADASYFGRRTAADGEIHWQKSAFTINNLVRAVTEPYPGAFSYLGQRKLTIWRSRPLDLVHNKLPGTVLSTAPLTVACGEGALEIITGQGEAGLYVQGDRLAQEMGIVTDVRLGNKPSNTLKRRTRVLILGVNGFIGNHLTERLLQDDRYEVYGLDIGSDAISRFLGNPAFHFVEGDISIHSEWIEYHIKKCDVILPLVAIATPIEYTRNPLRVFELDFEENLKIVRDCVKYNKRIVFPSTSEVYGMCDDKEFDEDTSRLIVGPINKQRWIYSVSKQLLDRVIWAYGVKEGLKFTLFRPFNWMGPRLDNLDAARIGSSRAITQLILNLVEGSPIKLVDGGAQKRCFTDIHDGIEALFRIIENRDGCCDGQIINIGNPTNEASIRELAEMLLTSFENHELRDHFPPFAGFKDIESSAYYGKGYQDVEYRTPSIKNARRILHWQPEIAMQQTVTETLDFFLRAAVIEKTAAPKDELNA.

Residues 1–304 are formyltransferase ArnAFT; the sequence is MKAIVFAYHD…EMGIVTDVRL (304 aa). Residue histidine 104 is the Proton donor; for formyltransferase activity of the active site. (6R)-10-formyltetrahydrofolate-binding positions include arginine 114 and 136–140; that span reads VKKAD. Positions 314–667 are dehydrogenase ArnADH; the sequence is RRTRVLILGV…TAAPKDELNA (354 aa). Residues aspartate 347 and 368-369 each bind NAD(+); that span reads DI. UDP-alpha-D-glucuronate contacts are provided by residues alanine 393, tyrosine 398, and 432 to 433; that span reads TS. Glutamate 434 (proton acceptor; for decarboxylase activity) is an active-site residue. UDP-alpha-D-glucuronate-binding positions include arginine 460, asparagine 492, 526 to 535, and tyrosine 613; that span reads KLVDGGAQKR. Residue arginine 619 is the Proton donor; for decarboxylase activity of the active site.

It in the N-terminal section; belongs to the Fmt family. UDP-L-Ara4N formyltransferase subfamily. The protein in the C-terminal section; belongs to the NAD(P)-dependent epimerase/dehydratase family. UDP-glucuronic acid decarboxylase subfamily. Homohexamer, formed by a dimer of trimers.

It carries out the reaction UDP-alpha-D-glucuronate + NAD(+) = UDP-beta-L-threo-pentopyranos-4-ulose + CO2 + NADH. The enzyme catalyses UDP-4-amino-4-deoxy-beta-L-arabinose + (6R)-10-formyltetrahydrofolate = UDP-4-deoxy-4-formamido-beta-L-arabinose + (6S)-5,6,7,8-tetrahydrofolate + H(+). It functions in the pathway nucleotide-sugar biosynthesis; UDP-4-deoxy-4-formamido-beta-L-arabinose biosynthesis; UDP-4-deoxy-4-formamido-beta-L-arabinose from UDP-alpha-D-glucuronate: step 1/3. The protein operates within nucleotide-sugar biosynthesis; UDP-4-deoxy-4-formamido-beta-L-arabinose biosynthesis; UDP-4-deoxy-4-formamido-beta-L-arabinose from UDP-alpha-D-glucuronate: step 3/3. It participates in bacterial outer membrane biogenesis; lipopolysaccharide biosynthesis. Functionally, bifunctional enzyme that catalyzes the oxidative decarboxylation of UDP-glucuronic acid (UDP-GlcUA) to UDP-4-keto-arabinose (UDP-Ara4O) and the addition of a formyl group to UDP-4-amino-4-deoxy-L-arabinose (UDP-L-Ara4N) to form UDP-L-4-formamido-arabinose (UDP-L-Ara4FN). The modified arabinose is attached to lipid A and is required for resistance to polymyxin and cationic antimicrobial peptides. This Yersinia pseudotuberculosis serotype IB (strain PB1/+) protein is Bifunctional polymyxin resistance protein ArnA.